Here is a 161-residue protein sequence, read N- to C-terminus: Nucleotide-binding protein BMASAVP1_A0673 (161 aa).

Belongs to the YajQ family.

Functionally, nucleotide-binding protein. The sequence is that of Nucleotide-binding protein BMASAVP1_A0673 from Burkholderia mallei (strain SAVP1).